The chain runs to 150 residues: Large ribosomal subunit protein uL11 (150 aa).

This sequence belongs to the universal ribosomal protein uL11 family. Part of the ribosomal stalk of the 50S ribosomal subunit. Interacts with L10 and the large rRNA to form the base of the stalk. L10 forms an elongated spine to which L12 dimers bind in a sequential fashion forming a multimeric L10(L12)X complex. In terms of processing, one or more lysine residues are methylated.

Forms part of the ribosomal stalk which helps the ribosome interact with GTP-bound translation factors. The chain is Large ribosomal subunit protein uL11 from Jannaschia sp. (strain CCS1).